A 550-amino-acid chain; its full sequence is Sterol O-acyltransferase 1 (550 aa).

Met1 carries the post-translational modification N-acetylmethionine. The segment at 1–36 (MVGEEKMSLRNRLSKSRENPEEDEDQRKPAKESLEA) is disordered. Topologically, residues 1 to 138 (MVGEEKMSLR…LDELLEVDHI (138 aa)) are cytoplasmic. Phosphoserine is present on Ser8. Over residues 15–34 (KSRENPEEDEDQRKPAKESL) the composition is skewed to basic and acidic residues. His137 is a cholesterol binding site. The helical transmembrane segment at 139-160 (RTIYHMFIALLILFILSTLVVD) threads the bilayer. The Lumenal portion of the chain corresponds to 161–180 (YIDEGRLVLEFSLLSYAFGK). Residues 181-206 (FPTVVWTWWIMFLSTFSVPYFLFQRW) form a helical membrane-spanning segment. Residues 207–218 (ATGYSKSSHPLI) are Cytoplasmic-facing. A helical membrane pass occupies residues 219–244 (NSLFHGFLFMVFQIGILGFGPTYVVL). Over 245 to 252 (AYTLPPAS) the chain is Lumenal. The helical transmembrane segment at 253 to 276 (RFIIIFEQIRFVMKAHSFVRENVP) threads the bilayer. Over 277 to 319 (RVLNSAKEKSSTVPIPTVNQYLYFLFAPTLIYRDSYPRNPTVR) the chain is Cytoplasmic. A helical membrane pass occupies residues 320–352 (WGYVAMQFAQVFGCFFYVYYIFERLCAPLFRNI). Residues 353–369 (KQEPFSARVLVLCVFNS) lie on the Lumenal side of the membrane. Residues 370 to 395 (ILPGVLILFLTFFAFLHCWLNAFAEM) traverse the membrane as a helical segment. The Cytoplasmic portion of the chain corresponds to 396 to 443 (LRFGDRMFYKDWWNSTSYSNYYRTWNVVVHDWLYYYAYKDFLWFFSKR). Residues 403–409 (FYKDWWN) carry the FYXDWWN motif motif. Asn415, Arg418, Asn421, His425, Tyr433, Lys445, and Ser456 together coordinate an acyl-CoA. The helical transmembrane segment at 444 to 468 (FKSAAMLAAFAVSAVVHEYALAVCL) threads the bilayer. His460 is an active-site residue. Residues 469–474 (SFFYPV) are Lumenal-facing. Residues 475-490 (LFVLFMFFGMAFNFIV) form a helical membrane-spanning segment. At 491–496 (NDSRKK) the chain is on the cytoplasmic side. The helical transmembrane segment at 497–528 (PIWNVMMWTSLFLGNGVLLCFYSQEWYARQHC) threads the bilayer. Cys528 and Cys546 are disulfide-bonded. Over 529–550 (PLKNPTFLDYVRPRSWTCRYVF) the chain is Lumenal.

It belongs to the membrane-bound acyltransferase family. Sterol o-acyltransferase subfamily. As to quaternary structure, may form homo- or heterodimers. Interacts with UBIAD1. Expressed in most tissues, but most strongly in the adrenal gland. Expressed more strongly in liver Kupffer cells than in hepatocytes.

It localises to the endoplasmic reticulum membrane. The catalysed reaction is a sterol + a long-chain fatty acyl-CoA = a long-chain 3-hydroxysterol ester + CoA. It catalyses the reaction cholesterol + an acyl-CoA = a cholesterol ester + CoA. It carries out the reaction cholesterol + (9Z)-octadecenoyl-CoA = cholesteryl (9Z-octadecenoate) + CoA. The enzyme catalyses cholesterol + hexadecanoyl-CoA = cholesteryl hexadecanoate + CoA. The catalysed reaction is octadecanoyl-CoA + cholesterol = cholesteryl octadecanoate + CoA. It catalyses the reaction (9Z,12Z)-octadecadienoyl-CoA + cholesterol = cholesteryl (9Z,12Z)-octadecadienoate + CoA. It carries out the reaction (5Z,8Z,11Z,14Z)-eicosatetraenoyl-CoA + cholesterol = cholesteryl (5Z,8Z,11Z,14Z)-eicosatetraenoate + CoA. The enzyme catalyses (9Z)-hexadecenoyl-CoA + cholesterol = cholesteryl (9Z)-hexadecenoate + CoA. The catalysed reaction is (11Z)-octadecenoyl-CoA + cholesterol = cholesteryl (11Z)-octadecenoate + CoA. It catalyses the reaction (7Z)-octadecenoyl-CoA + cholesterol = cholesteryl (7Z)-octadecenoate + CoA. In terms of biological role, catalyzes the formation of fatty acid-cholesterol esters, which are less soluble in membranes than cholesterol. Plays a role in lipoprotein assembly and dietary cholesterol absorption. Preferentially utilizes oleoyl-CoA ((9Z)-octadecenoyl-CoA) as a substrate: shows a higher activity towards an acyl-CoA substrate with a double bond at the delta-9 position (9Z) than towards saturated acyl-CoA or an unsaturated acyl-CoA with a double bond at the delta-7 (7Z) or delta-11 (11Z) positions. The chain is Sterol O-acyltransferase 1 (SOAT1) from Macaca fascicularis (Crab-eating macaque).